We begin with the raw amino-acid sequence, 1123 residues long: Telomerase reverse transcriptase (1123 aa).

Disordered regions lie at residues 191 to 242 (ENKR…KTTK) and 410 to 439 (GTTSQSSRRQKADKLPHGSSSSQTGKPKCP). A compositionally biased stretch (polar residues) spans 201-210 (QPPTKRQWLS). The Reverse transcriptase domain maps to 596–929 (LVDDAEAESS…PFVRWTGLLI (334 aa)). Positions 691, 860, and 861 each coordinate Mg(2+).

The protein belongs to the reverse transcriptase family. Telomerase subfamily. Component of the telomerase ribonucleoprotein complex. Interacts with POT1A.

The protein localises to the nucleus. The protein resides in the chromosome. Its subcellular location is the telomere. It catalyses the reaction DNA(n) + a 2'-deoxyribonucleoside 5'-triphosphate = DNA(n+1) + diphosphate. In terms of biological role, telomerase is a ribonucleoprotein enzyme essential for the replication of chromosome termini in most eukaryotes. It elongates telomeres. It is a reverse transcriptase that adds simple sequence repeats to chromosome ends by copying a template sequence within the RNA component of the enzyme. Required to prevent genome instability induced by breakage-fusion-bridge (BFB) cycles. Can extend completely non-telomeric sequences using RNA template in vitro. This Arabidopsis thaliana (Mouse-ear cress) protein is Telomerase reverse transcriptase (TERT).